Reading from the N-terminus, the 442-residue chain is Cell division protein FtsA (442 aa).

It belongs to the FtsA/MreB family. In terms of assembly, self-interacts. Interacts with FtsZ.

The protein localises to the cell inner membrane. Functionally, cell division protein that is involved in the assembly of the Z ring. May serve as a membrane anchor for the Z ring. The sequence is that of Cell division protein FtsA from Rhizobium meliloti (strain 1021) (Ensifer meliloti).